The chain runs to 526 residues: GMP synthase [glutamine-hydrolyzing] (526 aa).

Residues 14 to 208 (SILIVDFGSQ…VHDICGLAGD (195 aa)) form the Glutamine amidotransferase type-1 domain. The active-site Nucleophile is the C91. Active-site residues include H182 and E184. In terms of domain architecture, GMPS ATP-PPase spans 209-401 (WTMAEFRQTK…LGMPDVFVDR (193 aa)). 236–242 (SGGVDSS) serves as a coordination point for ATP.

As to quaternary structure, homodimer.

It catalyses the reaction XMP + L-glutamine + ATP + H2O = GMP + L-glutamate + AMP + diphosphate + 2 H(+). It participates in purine metabolism; GMP biosynthesis; GMP from XMP (L-Gln route): step 1/1. Functionally, catalyzes the synthesis of GMP from XMP. The sequence is that of GMP synthase [glutamine-hydrolyzing] from Zymomonas mobilis subsp. mobilis (strain ATCC 31821 / ZM4 / CP4).